The following is a 236-amino-acid chain: 5'-methylthioadenosine/S-adenosylhomocysteine nucleosidase (236 aa).

Catalysis depends on Glu12, which acts as the Proton acceptor. Substrate-binding positions include Gly78, Ile153, and 174 to 175; that span reads ME. Catalysis depends on Asp198, which acts as the Proton donor.

Belongs to the PNP/UDP phosphorylase family. MtnN subfamily.

It carries out the reaction S-adenosyl-L-homocysteine + H2O = S-(5-deoxy-D-ribos-5-yl)-L-homocysteine + adenine. It catalyses the reaction S-methyl-5'-thioadenosine + H2O = 5-(methylsulfanyl)-D-ribose + adenine. The catalysed reaction is 5'-deoxyadenosine + H2O = 5-deoxy-D-ribose + adenine. It participates in amino-acid biosynthesis; L-methionine biosynthesis via salvage pathway; S-methyl-5-thio-alpha-D-ribose 1-phosphate from S-methyl-5'-thioadenosine (hydrolase route): step 1/2. Its function is as follows. Catalyzes the irreversible cleavage of the glycosidic bond in both 5'-methylthioadenosine (MTA) and S-adenosylhomocysteine (SAH/AdoHcy) to adenine and the corresponding thioribose, 5'-methylthioribose and S-ribosylhomocysteine, respectively. Also cleaves 5'-deoxyadenosine, a toxic by-product of radical S-adenosylmethionine (SAM) enzymes, into 5-deoxyribose and adenine. In Shewanella baltica (strain OS185), this protein is 5'-methylthioadenosine/S-adenosylhomocysteine nucleosidase.